A 305-amino-acid polypeptide reads, in one-letter code: Spermatogenesis-associated protein 4 (305 aa).

In terms of domain architecture, Calponin-homology (CH) spans 49–155 (SRLSRSVLRW…EEVYTLLTHR (107 aa)).

Highly expressed in testis, the expression is observed precisely in seminiferous tubules.

It localises to the nucleus. Its function is as follows. May play a role in apoptosis regulation. This Homo sapiens (Human) protein is Spermatogenesis-associated protein 4 (SPATA4).